Reading from the N-terminus, the 299-residue chain is Probable alpha-L-glutamate ligase 2 (299 aa).

Positions 104–287 (MQLMSRRGIG…VAGAIIEFVE (184 aa)) constitute an ATP-grasp domain. ATP is bound by residues K141, 178-179 (EY), D187, and 211-213 (RSN). Positions 248, 260, and 262 each coordinate Mg(2+). Residues D248, E260, and N262 each contribute to the Mn(2+) site.

It belongs to the RimK family. Mg(2+) is required as a cofactor. Mn(2+) serves as cofactor.

This is Probable alpha-L-glutamate ligase 2 from Shewanella sp. (strain MR-4).